A 457-amino-acid chain; its full sequence is Siroheme synthase (457 aa).

The segment at 1-204 (MDHLPIFCQL…NDQKAITETT (204 aa)) is precorrin-2 dehydrogenase /sirohydrochlorin ferrochelatase. Residues 22 to 23 (DV) and 43 to 44 (LA) each bind NAD(+). A Phosphoserine modification is found at S128. Residues 216-457 (GEVVLVGAGP…RDKLNWFSNH (242 aa)) form a uroporphyrinogen-III C-methyltransferase region. Residue P225 participates in S-adenosyl-L-methionine binding. The active-site Proton acceptor is D248. Catalysis depends on K270, which acts as the Proton donor. Residues 301–303 (GGD), I306, 331–332 (TA), M382, and G411 each bind S-adenosyl-L-methionine.

This sequence in the N-terminal section; belongs to the precorrin-2 dehydrogenase / sirohydrochlorin ferrochelatase family. It in the C-terminal section; belongs to the precorrin methyltransferase family.

The catalysed reaction is uroporphyrinogen III + 2 S-adenosyl-L-methionine = precorrin-2 + 2 S-adenosyl-L-homocysteine + H(+). It catalyses the reaction precorrin-2 + NAD(+) = sirohydrochlorin + NADH + 2 H(+). The enzyme catalyses siroheme + 2 H(+) = sirohydrochlorin + Fe(2+). It participates in cofactor biosynthesis; adenosylcobalamin biosynthesis; precorrin-2 from uroporphyrinogen III: step 1/1. The protein operates within cofactor biosynthesis; adenosylcobalamin biosynthesis; sirohydrochlorin from precorrin-2: step 1/1. It functions in the pathway porphyrin-containing compound metabolism; siroheme biosynthesis; precorrin-2 from uroporphyrinogen III: step 1/1. Its pathway is porphyrin-containing compound metabolism; siroheme biosynthesis; siroheme from sirohydrochlorin: step 1/1. It participates in porphyrin-containing compound metabolism; siroheme biosynthesis; sirohydrochlorin from precorrin-2: step 1/1. In terms of biological role, multifunctional enzyme that catalyzes the SAM-dependent methylations of uroporphyrinogen III at position C-2 and C-7 to form precorrin-2 via precorrin-1. Then it catalyzes the NAD-dependent ring dehydrogenation of precorrin-2 to yield sirohydrochlorin. Finally, it catalyzes the ferrochelation of sirohydrochlorin to yield siroheme. The chain is Siroheme synthase from Shigella flexneri.